Reading from the N-terminus, the 1001-residue chain is MAESESLVPDTGAVFTFGKTKFAENIPSKFWFKNDIPICLSCGDEHTAIVTGNNKLYMFGSNNWGQLGLGSKAAIIKPTCIKALKPEKVKLAACGRNHTLVSTDTGGVYAAGGNNEGQLGLGDTDDRDTFHQIVFFTPADTIKQLSAGANTSAALTEDGKLFMWGDNSEGQIGLEDKSNVCIPHEVTVGKPISWISCGYYHSAFVTMDGELYTFGEPENGKLGLPNELLMNHRSPQRVLGIPERVIQVACGGGHTVVLTEKVVYAFGLGQFGQLGLGTFLFETSEPKIIERIKDQKICHISCGENHTALMTELGLLYTFGDGRHGKLGLGMENFTNQFFPTLCSNFLRFAVQLIACGGCHMLVFATPRLGTIDEPKFEDVYEPYISTGSFSINDLSPRSSLNRSLSARLRRRERERPPCSASMVGTLPPLEGTSASTSAYFYPSSPPFHLSVNNYPEKSPSESMEPLDSDYFEDKMNKDTETENSSAVDSENFGETNDILNMTHMMTTSSNEKLLDFSPIQKQQNQDTFEKVMESTPCTENEDSYEYEEMSKIKEVTVYKQYLAKGIYMIRPAEILEAFSDEEVGNGLDQVEEPRVFTDGKGLQSKQVGKESDEEIVSEKKTEVMEVADVKKIRESEENSKSDSLFDDLPDKTMNSESEDNKDIAEERRSSEQNMTFDSETELVEEPDSYMECERHSEQDSAEELEQPKLVEYSSEEKDEKDEKDDDEVETENLWYDRNCTEQETENVFRATRFFPKFDLKHDHLSGIPEEQEGPEDSEGNVVVEQVVQAQKENLEFEGDRKEAKAEAPSDVITEKEAPQLSETVKPEEGEMDEEISILNVEDTVEEERKEGEKEIVEEGSIPETEGSETIDITDEKLDEVLKEEDSASLLQRALREYNENPKGHMYDRVKSSSSEILGGNDPTSKDIKKAKKISFFNRMSLTGQKLMQNTNDPLPEIKPIGDQIALQSDKKDANQNHMGQNLQDSTTPNMEGKSKSCTIL.

6 RCC1 repeats span residues 54-105 (NKLY…STDT), 106-158 (GGVY…LTED), 159-208 (GKLF…VTMD), 209-261 (GELY…LTEK), 262-313 (VVYA…MTEL), and 314-367 (GLLY…FATP). The tract at residues 404 to 428 (SLSARLRRRERERPPCSASMVGTLP) is disordered. At Ser-518 the chain carries Phosphoserine. Basic and acidic residues-rich tracts occupy residues 631-641 (KKIRESEENSK) and 659-671 (EDNK…RRSS). Disordered stretches follow at residues 631–738 (KKIR…WYDR), 794–869 (NLEF…EGSE), 902–925 (PKGH…DPTS), and 962–1001 (GDQI…CTIL). Acidic residues-rich tracts occupy residues 679 to 691 (SETE…DSYM) and 717 to 731 (EKDE…EVET). Composition is skewed to basic and acidic residues over residues 794-818 (NLEF…EKEA), 847-857 (EERKEGEKEIV), and 902-911 (PKGHMYDRVK). Over residues 976–1001 (QNHMGQNLQDSTTPNMEGKSKSCTIL) the composition is skewed to polar residues. Cysteine methyl ester is present on Cys-998. Cys-998 is lipidated: S-geranylgeranyl cysteine. A propeptide spans 999–1001 (TIL) (removed in mature form).

As to quaternary structure, interacts with SPATA7. Interacts with PDE6D. Interacts with RPGRIP1 and RPGRIP1L; PDE6D, RPGRIP1 and RPGRIP1L may compete for the same binding sites. Interacts with NPM1. Interacts with PDE6D. Isoform 5 interacts (via N-terminus) with SMC1A and SMC3. Isoform 5 interacts with CEP290. Interacts with WHRN. Interacts with RAB37 and RAB8A (in GDP-bound forms); functions as GEF for RAB37 and RAB8A. In terms of processing, prenylated. As to expression, expressed in the retina (at protein level). Located mainly in the connecting cilia between the outer segment and inner segment and also observed in the outer plexiform layer, inner plexiform layer, and ganglion cell layer of the retinas. Isoform 1: Expressed in the retina (at protein level). Isoform 5: Expressed in the retina (at protein level). Expressed in the brain. Expressed in the testis (at protein level). Expressed in kidney (at protein level).

It localises to the golgi apparatus. Its subcellular location is the cytoplasm. It is found in the cytoskeleton. The protein resides in the microtubule organizing center. The protein localises to the centrosome. It localises to the cell projection. Its subcellular location is the cilium. It is found in the cilium basal body. The protein resides in the cilium axoneme. The protein localises to the flagellum axoneme. Acts as a guanine-nucleotide releasing factor (GEF) for RAB8A and RAB37 by promoting the conversion of inactive RAB-GDP to the active form RAB-GTP. GEF activity towards RAB8A may facilitate ciliary trafficking by modulating ciliary intracellular localization of RAB8A. GEF activity towards RAB37 maintains autophagic homeostasis and retinal function. Involved in photoreceptor integrity. May control cilia formation by regulating actin stress filaments and cell contractility. May be involved in microtubule organization and regulation of transport in primary cilia. Its function is as follows. Isoform 5 may play a critical role in spermatogenesis and in intraflagellar transport processes. In Mus musculus (Mouse), this protein is X-linked retinitis pigmentosa GTPase regulator.